A 92-amino-acid chain; its full sequence is Small ribosomal subunit protein uS19c (92 aa).

Belongs to the universal ribosomal protein uS19 family.

It localises to the plastid. Its subcellular location is the chloroplast. Its function is as follows. Protein S19 forms a complex with S13 that binds strongly to the 16S ribosomal RNA. In Pyropia yezoensis (Susabi-nori), this protein is Small ribosomal subunit protein uS19c.